Consider the following 608-residue polypeptide: UvrABC system protein C (608 aa).

One can recognise a GIY-YIG domain in the interval 22-100 (EKPGIYQYLN…IKKYKPRYNV (79 aa)). Residues 214–249 (QEISRLLYQRMQDLAAEMKFEEAQKVKEKYALIENY) form the UVR domain.

The protein belongs to the UvrC family. As to quaternary structure, interacts with UvrB in an incision complex.

The protein localises to the cytoplasm. The UvrABC repair system catalyzes the recognition and processing of DNA lesions. UvrC both incises the 5' and 3' sides of the lesion. The N-terminal half is responsible for the 3' incision and the C-terminal half is responsible for the 5' incision. The polypeptide is UvrABC system protein C (Bacteroides fragilis (strain ATCC 25285 / DSM 2151 / CCUG 4856 / JCM 11019 / LMG 10263 / NCTC 9343 / Onslow / VPI 2553 / EN-2)).